The primary structure comprises 579 residues: Laccase-24 (579 aa).

The first 23 residues, 1-23 (MARSWSLLLLPFALALVASVAQA), serve as a signal peptide directing secretion. Plastocyanin-like domains follow at residues 31-148 (NVGN…PRGG) and 159-322 (EEVV…YGGG). 2 N-linked (GlcNAc...) asparagine glycosylation sites follow: N34 and N78. The Cu cation site is built by H82 and H84. N-linked (GlcNAc...) asparagine glycosylation is found at N110 and N116. Cu cation contacts are provided by H127 and H129. 11 N-linked (GlcNAc...) asparagine glycosylation sites follow: N204, N209, N219, N241, N312, N337, N348, N398, N405, N444, and N462. One can recognise a Plastocyanin-like 3 domain in the interval 425–563 (DFPDTPPIVF…GMVFEVQNGP (139 aa)). Cu cation contacts are provided by H480, H483, and H485. N-linked (GlcNAc...) asparagine glycosylation is present at N500. Cu cation is bound by residues H542, C543, H544, and H548.

This sequence belongs to the multicopper oxidase family. Requires Cu cation as cofactor.

The protein localises to the secreted. The protein resides in the extracellular space. It is found in the apoplast. It carries out the reaction 4 hydroquinone + O2 = 4 benzosemiquinone + 2 H2O. Its function is as follows. Lignin degradation and detoxification of lignin-derived products. This is Laccase-24 (LAC24) from Oryza sativa subsp. japonica (Rice).